The following is a 155-amino-acid chain: Glycosylation-dependent cell adhesion molecule 1 (155 aa).

The signal sequence occupies residues 1–18; the sequence is MKFFAVLLLASLAATSLA. T34 is a glycosylation site (O-linked (GalNAc...) threonine). Phosphoserine occurs at positions 48, 53, 57, 59, and 65. Positions 74-109 are disordered; that stretch reads ARRHQNQNPKLLHPVPQESSFRNTATQSEETKELTP. Polar residues predominate over residues 90-101; sequence QESSFRNTATQS.

This sequence belongs to the PP3/GlyCAM-1 family. As to expression, highly expressed in whey fraction of camel milk.

The protein is Glycosylation-dependent cell adhesion molecule 1 (GLYCAM1) of Camelus dromedarius (Dromedary).